Reading from the N-terminus, the 156-residue chain is Male-specific protein scotti (156 aa).

The disordered stretch occupies residues 26-48; it reads TADAGDDADTLEDGQQQQQQQHQ. Asn137 carries an N-linked (GlcNAc...) asparagine glycan.

Belongs to the male-specific scotti family.

Post-meiotically transcribed gene that has a role in late spermiogenesis; required for actin cone progression during spermatid individualization. The protein is Male-specific protein scotti of Drosophila erecta (Fruit fly).